The chain runs to 245 residues: tRNA pseudouridine synthase A (245 aa).

The active-site Nucleophile is aspartate 52. Tyrosine 112 contributes to the substrate binding site.

Belongs to the tRNA pseudouridine synthase TruA family. In terms of assembly, homodimer.

It carries out the reaction uridine(38/39/40) in tRNA = pseudouridine(38/39/40) in tRNA. Its function is as follows. Formation of pseudouridine at positions 38, 39 and 40 in the anticodon stem and loop of transfer RNAs. The protein is tRNA pseudouridine synthase A of Dictyoglomus turgidum (strain DSM 6724 / Z-1310).